The primary structure comprises 636 residues: Multicopper oxidase CTB12 (636 aa).

Positions 1–23 (MWSVRLYPLALTLLFQCVSPAAA) are cleaved as a signal peptide. Residues 62-168 (AGIGFREAIF…LYGAVVIAPD (107 aa)) enclose the Plastocyanin-like 1 domain. Residues His-104 and His-106 each coordinate Cu cation. An N-linked (GlcNAc...) asparagine glycan is attached at Asn-136. Cu cation contacts are provided by His-148 and His-150. Asn-304 carries N-linked (GlcNAc...) asparagine glycosylation. The Plastocyanin-like 2 domain occupies 318–381 (LTFVNPGGLY…QEKARHVVRV (64 aa)). A glycan (N-linked (GlcNAc...) asparagine) is linked at Asn-472. Residues 486–613 (NVEDVPATEL…GGMGMVVLDG (128 aa)) form the Plastocyanin-like 3 domain. His-519, His-522, and His-524 together coordinate Cu cation. Residue Asn-576 is glycosylated (N-linked (GlcNAc...) asparagine). Cu cation contacts are provided by His-595, Cys-596, His-597, and His-601.

This sequence belongs to the multicopper oxidase family.

The protein operates within mycotoxin biosynthesis. Its function is as follows. Multicopper oxidase; part of the gene cluster that mediates the biosynthesis of cercosporin, a light-activated, non-host-selective toxin. The perylenequinone chromophore of cercosporin absorbs light energy to attain an electronically-activated triplet state and produces active oxygen species such as the hydroxyl radical, superoxide, hydrogen peroxide or singlet oxygen upon reaction with oxygen molecules. These reactive oxygen species cause damage to various cellular components including lipids, proteins and nucleic acids. The first step of cercosporin biosynthesis is performed by the polyketide synthase CTB1 which catalyzes the formation of nor-toralactone. The starter unit acyltransferase (SAT) domain of CTB1 initiates polyketide extension by the selective utilization of acetyl-CoA, which is elongated to the heptaketide in the beta-ketoacyl synthase (KS) domain by successive condensations with six malonyl units introduced by the malonyl acyltransferase (MAT) domain. The product template (PT) domain catalyzes C4-C9 and C2-C11 aldol cyclizations and dehydrations to a trihydroxynaphthalene, which is thought to be delivered to the thioesterase (TE) domain for product release. The bifunctional enzyme CTB3 then methylates nor-toralactone to toralactone before conducting an unusual oxidative aromatic ring opening. The O-methyltransferase CTB2 further methylates the nascent OH-6 of the CBT3 product, blocking further oxidation at this site before the reductase CTB6 reduces the 2-oxopropyl ketone at position C7, giving naphthalene. The FAD-dependent monooxygenase CTB5 in concert with the multicopper oxidase CTB12 are responsible for homodimerization of naphthalene with CTB7 installing the dioxepine moiety, finally producing cercosporin. The fasciclin domain-containing protein CTB11 might act with CTB5 and CTB12 whereas the roles of CTB9 and CTB10 have still to be elucidated. The sequence is that of Multicopper oxidase CTB12 from Cercospora beticola (Sugarbeet leaf spot fungus).